A 324-amino-acid chain; its full sequence is ATP synthase subunit a 2 (324 aa).

Residues 1–33 form the signal peptide; sequence MKRVNVFRSGVFSRLFALLLPFLLGINGLVYAS. 6 helical membrane passes run 95–115, 157–177, 179–199, 224–244, 257–277, and 291–311; these read HVVMMWIASAILLVVFLLVGN, LPYLLTVFAFILLLNLLGLVP, GATATGNINVTLTLAVFTFFI, ALWIIMIPIEIIGLFTKPFAL, IVILSLIFISFILKSYIVAMF, and IFVAFLQAFIFTMLSALFIGL.

The protein belongs to the ATPase A chain family. As to quaternary structure, F-type ATPases have 2 components, CF(1) - the catalytic core - and CF(0) - the membrane proton channel. CF(1) has five subunits: alpha(3), beta(3), gamma(1), delta(1), epsilon(1). CF(0) has four main subunits: a, b, b' and c.

Its subcellular location is the cell inner membrane. Key component of the proton channel; it plays a direct role in the translocation of protons across the membrane. This chain is ATP synthase subunit a 2, found in Prosthecochloris aestuarii (strain DSM 271 / SK 413).